Consider the following 283-residue polypeptide: Acetylglutamate kinase (283 aa).

Substrate contacts are provided by residues 63–64, Arg-85, and Asn-179; that span reads GG.

This sequence belongs to the acetylglutamate kinase family. ArgB subfamily.

It is found in the cytoplasm. The enzyme catalyses N-acetyl-L-glutamate + ATP = N-acetyl-L-glutamyl 5-phosphate + ADP. It participates in amino-acid biosynthesis; L-arginine biosynthesis; N(2)-acetyl-L-ornithine from L-glutamate: step 2/4. In terms of biological role, catalyzes the ATP-dependent phosphorylation of N-acetyl-L-glutamate. The protein is Acetylglutamate kinase of Clostridium kluyveri (strain NBRC 12016).